The chain runs to 120 residues: NAD(P)H-quinone oxidoreductase subunit 3, chloroplastic (120 aa).

A run of 3 helical transmembrane segments spans residues 9 to 29, 64 to 84, and 88 to 108; these read IFWA…LISG, MFAL…PWAM, and VLGV…IVGL.

This sequence belongs to the complex I subunit 3 family. As to quaternary structure, NDH is composed of at least 16 different subunits, 5 of which are encoded in the nucleus.

The protein localises to the plastid. It is found in the chloroplast thylakoid membrane. The catalysed reaction is a plastoquinone + NADH + (n+1) H(+)(in) = a plastoquinol + NAD(+) + n H(+)(out). It carries out the reaction a plastoquinone + NADPH + (n+1) H(+)(in) = a plastoquinol + NADP(+) + n H(+)(out). In terms of biological role, NDH shuttles electrons from NAD(P)H:plastoquinone, via FMN and iron-sulfur (Fe-S) centers, to quinones in the photosynthetic chain and possibly in a chloroplast respiratory chain. The immediate electron acceptor for the enzyme in this species is believed to be plastoquinone. Couples the redox reaction to proton translocation, and thus conserves the redox energy in a proton gradient. This Populus alba (White poplar) protein is NAD(P)H-quinone oxidoreductase subunit 3, chloroplastic.